Here is a 284-residue protein sequence, read N- to C-terminus: GPN-loop GTPase 3 (284 aa).

Residue 13 to 18 participates in GTP binding; sequence GSGKST. The Gly-Pro-Asn (GPN)-loop; involved in dimer interface signature appears at 72–74; it reads GPN. Residue 174–177 coordinates GTP; the sequence is TKMD. The interval 261–284 is disordered; it reads KEPKEHEEESSSMFDEYFQERQNE.

Belongs to the GPN-loop GTPase family. Heterodimer with GPN1. Binds to RNA polymerase II (RNAPII). Interacts directly with subunits RPB4 and RPB7 and the CTD of RPB1.

Small GTPase required for proper localization of RNA polymerase II (RNAPII). May act at an RNAP assembly step prior to nuclear import. The polypeptide is GPN-loop GTPase 3 (Rattus norvegicus (Rat)).